The primary structure comprises 353 residues: UDP-N-acetylglucosamine--N-acetylmuramyl-(pentapeptide) pyrophosphoryl-undecaprenol N-acetylglucosamine transferase (353 aa).

Residues 10-12, Asn-124, Ser-183, and Gln-283 each bind UDP-N-acetyl-alpha-D-glucosamine; that span reads TGG.

It belongs to the glycosyltransferase 28 family. MurG subfamily.

It localises to the cell inner membrane. It catalyses the reaction di-trans,octa-cis-undecaprenyl diphospho-N-acetyl-alpha-D-muramoyl-L-alanyl-D-glutamyl-meso-2,6-diaminopimeloyl-D-alanyl-D-alanine + UDP-N-acetyl-alpha-D-glucosamine = di-trans,octa-cis-undecaprenyl diphospho-[N-acetyl-alpha-D-glucosaminyl-(1-&gt;4)]-N-acetyl-alpha-D-muramoyl-L-alanyl-D-glutamyl-meso-2,6-diaminopimeloyl-D-alanyl-D-alanine + UDP + H(+). Its pathway is cell wall biogenesis; peptidoglycan biosynthesis. In terms of biological role, cell wall formation. Catalyzes the transfer of a GlcNAc subunit on undecaprenyl-pyrophosphoryl-MurNAc-pentapeptide (lipid intermediate I) to form undecaprenyl-pyrophosphoryl-MurNAc-(pentapeptide)GlcNAc (lipid intermediate II). The protein is UDP-N-acetylglucosamine--N-acetylmuramyl-(pentapeptide) pyrophosphoryl-undecaprenol N-acetylglucosamine transferase of Helicobacter pylori (strain Shi470).